A 242-amino-acid polypeptide reads, in one-letter code: Large ribosomal subunit protein uL3 (242 aa).

Residue Q151 is modified to N5-methylglutamine.

The protein belongs to the universal ribosomal protein uL3 family. In terms of assembly, part of the 50S ribosomal subunit. Forms a cluster with proteins L14 and L19. Post-translationally, methylated by PrmB.

One of the primary rRNA binding proteins, it binds directly near the 3'-end of the 23S rRNA, where it nucleates assembly of the 50S subunit. This chain is Large ribosomal subunit protein uL3, found in Zymomonas mobilis subsp. mobilis (strain ATCC 31821 / ZM4 / CP4).